The chain runs to 720 residues: uncharacterized protein (720 aa).

A lipid anchor (N-myristoyl glycine; by host) is attached at glycine 2.

This is an uncharacterized protein from Cryphonectria parasitica mycoreovirus 1 (strain 9B21) (CpMYRV-1).